The sequence spans 85 residues: Putative membrane protein insertion efficiency factor (85 aa).

This sequence belongs to the UPF0161 family.

The protein resides in the cell membrane. Could be involved in insertion of integral membrane proteins into the membrane. The polypeptide is Putative membrane protein insertion efficiency factor (Buchnera aphidicola subsp. Schizaphis graminum (strain Sg)).